The chain runs to 304 residues: Small glutamine-rich tetratricopeptide repeat-containing protein beta (304 aa).

4 TPR repeats span residues 15–49, 85–118, 119–152, and 153–186; these read LREQ…SPED, ADQL…DPNN, AVYY…DSKY, and SKAY…DPEN. At Lys-131 the chain carries N6-acetyllysine. Phosphoserine occurs at positions 293, 295, and 297.

The protein belongs to the SGT family. As to quaternary structure, homooligomerize.

Functionally, co-chaperone that binds directly to HSC70 and HSP70 and regulates their ATPase activity. The chain is Small glutamine-rich tetratricopeptide repeat-containing protein beta (SGTB) from Homo sapiens (Human).